Here is a 326-residue protein sequence, read N- to C-terminus: 5-dehydro-2-deoxygluconokinase (326 aa).

The protein belongs to the carbohydrate kinase PfkB family.

The catalysed reaction is 5-dehydro-2-deoxy-D-gluconate + ATP = 6-phospho-5-dehydro-2-deoxy-D-gluconate + ADP + H(+). It functions in the pathway polyol metabolism; myo-inositol degradation into acetyl-CoA; acetyl-CoA from myo-inositol: step 5/7. Catalyzes the phosphorylation of 5-dehydro-2-deoxy-D-gluconate (2-deoxy-5-keto-D-gluconate or DKG) to 6-phospho-5-dehydro-2-deoxy-D-gluconate (DKGP). In Shouchella clausii (strain KSM-K16) (Alkalihalobacillus clausii), this protein is 5-dehydro-2-deoxygluconokinase.